Here is a 250-residue protein sequence, read N- to C-terminus: Anti-Pycsar protein Apyc1 (250 aa).

A beta-lactamase-like region spans residues 19-220 (YNNNALVKCN…AVQEMIMLMH (202 aa)). Zn(2+) is bound by residues His61, His63, Asp65, His66, His146, Asp166, and His220.

This sequence belongs to the anti-Pycsar protein Apyc1 family. In terms of assembly, homodimer. Zn(2+) serves as cofactor.

The enzyme catalyses 3',5'-cyclic CMP + H2O = CMP + H(+). It carries out the reaction 3',5'-cyclic UMP + H2O = UMP + H(+). Its function is as follows. Counteracts the endogenous Pycsar antiviral defense system. Phosphodiesterase that enables metal-dependent hydrolysis of host cyclic nucleotide Pycsar defense signals such as cCMP and cUMP. In Paenibacillus xerothermodurans, this protein is Anti-Pycsar protein Apyc1.